Reading from the N-terminus, the 904-residue chain is DNA mismatch repair protein MutS (904 aa).

655 to 662 is an ATP binding site; sequence GPNMGGKS.

Belongs to the DNA mismatch repair MutS family.

Its function is as follows. This protein is involved in the repair of mismatches in DNA. It is possible that it carries out the mismatch recognition step. This protein has a weak ATPase activity. The sequence is that of DNA mismatch repair protein MutS from Rhizorhabdus wittichii (strain DSM 6014 / CCUG 31198 / JCM 15750 / NBRC 105917 / EY 4224 / RW1) (Sphingomonas wittichii).